We begin with the raw amino-acid sequence, 464 residues long: Argininosuccinate lyase (464 aa).

The protein belongs to the lyase 1 family. Argininosuccinate lyase subfamily.

The protein resides in the cytoplasm. The catalysed reaction is 2-(N(omega)-L-arginino)succinate = fumarate + L-arginine. Its pathway is amino-acid biosynthesis; L-arginine biosynthesis; L-arginine from L-ornithine and carbamoyl phosphate: step 3/3. Strongly inhibited by L-arginine. Inhibitory effects are lowered at pH 7.0 compared to those at pH 8.0. At 37 degrees Celsius and pH 7.5, activity decreases to 73% and 31% in the presence of 1 mM and 10 mM arginine, respectively. Activity also decreases to 84%, 93%, 82% and 85% in the presence of 10 mM sodium citrate, citrulline, asparatate and glutamate, respectively. Activity decreases to 96% in presence of 1 mM L-lysine. Functionally, catalyzes the last step of arginine biosynthesis, the conversion of argininosuccinate into L-arginine and fumarate. This Arthrospira platensis (strain NIES-39 / UTEX 3086 / IAM M-135) (Spirulina platensis) protein is Argininosuccinate lyase.